Reading from the N-terminus, the 129-residue chain is Small ribosomal subunit protein uS11 (129 aa).

The protein belongs to the universal ribosomal protein uS11 family. In terms of assembly, part of the 30S ribosomal subunit. Interacts with proteins S7 and S18. Binds to IF-3.

In terms of biological role, located on the platform of the 30S subunit, it bridges several disparate RNA helices of the 16S rRNA. Forms part of the Shine-Dalgarno cleft in the 70S ribosome. The sequence is that of Small ribosomal subunit protein uS11 from Mannheimia succiniciproducens (strain KCTC 0769BP / MBEL55E).